The sequence spans 245 residues: 2,3-bisphosphoglycerate-dependent phosphoglycerate mutase (245 aa).

Residues 8–15, 21–22, R60, 87–90, K98, 114–115, and 183–184 each bind substrate; these read RHGQSLWN, TG, ERHY, RR, and GN. H9 acts as the Tele-phosphohistidine intermediate in catalysis. The active-site Proton donor/acceptor is the E87.

Belongs to the phosphoglycerate mutase family. BPG-dependent PGAM subfamily.

The enzyme catalyses (2R)-2-phosphoglycerate = (2R)-3-phosphoglycerate. It functions in the pathway carbohydrate degradation; glycolysis; pyruvate from D-glyceraldehyde 3-phosphate: step 3/5. Functionally, catalyzes the interconversion of 2-phosphoglycerate and 3-phosphoglycerate. In Bacillus anthracis (strain A0248), this protein is 2,3-bisphosphoglycerate-dependent phosphoglycerate mutase.